Reading from the N-terminus, the 234-residue chain is MQLITTENKLAGSKKALEIIEKGITSGEVNTLGLATGSTPETLYAELVKSDVDTKNVTTTNLDEYVGLAADDPNSYHYYMNDLLFSKKAFKESFLPNGEATDAEAECARYEGILSEHPIDIQVLGIGTNGHIGFNEPGTSFDSLTHKVVLTDSTREANKRFFEREEDVPTHAYSMGIKSIMNAKKIILLAFGENKAQAIKETIKGPVDVNCPASVLQNHPDVTVILDNEAASLL.

The active-site Proton acceptor; for enolization step is the Asp63. Catalysis depends on Asn129, which acts as the For ring-opening step. His131 (proton acceptor; for ring-opening step) is an active-site residue. Glu136 acts as the For ring-opening step in catalysis.

Belongs to the glucosamine/galactosamine-6-phosphate isomerase family. NagB subfamily.

The enzyme catalyses alpha-D-glucosamine 6-phosphate + H2O = beta-D-fructose 6-phosphate + NH4(+). Its pathway is amino-sugar metabolism; N-acetylneuraminate degradation; D-fructose 6-phosphate from N-acetylneuraminate: step 5/5. Its function is as follows. Catalyzes the reversible isomerization-deamination of glucosamine 6-phosphate (GlcN6P) to form fructose 6-phosphate (Fru6P) and ammonium ion. This chain is Glucosamine-6-phosphate deaminase, found in Listeria innocua serovar 6a (strain ATCC BAA-680 / CLIP 11262).